Consider the following 175-residue polypeptide: Ribosome maturation factor RimP (175 aa).

The segment at 152–175 (EFNRPTDGPGDDGDDGGDDEAGEA) is disordered. Residues 160 to 175 (PGDDGDDGGDDEAGEA) show a composition bias toward acidic residues.

This sequence belongs to the RimP family.

The protein localises to the cytoplasm. Required for maturation of 30S ribosomal subunits. This chain is Ribosome maturation factor RimP, found in Nocardioides sp. (strain ATCC BAA-499 / JS614).